The following is a 432-amino-acid chain: Type I restriction enzyme MjaIX specificity subunit (432 aa).

This sequence belongs to the type-I restriction system S methylase family. As to quaternary structure, the type I restriction/modification system is composed of three polypeptides R, M and S.

In terms of biological role, the specificity (S) subunit of a type I restriction enzyme; this subunit dictates DNA sequence specificity. The M and S subunits together form a methyltransferase (MTase) that methylates A-3 on the top and A-2 on the bottom strand of the sequence 5'-CCAN(5)GTR-3'. In the presence of the R subunit the complex can also act as an endonuclease, binding to the same target sequence but cutting the DNA some distance from this site. Whether the DNA is cut or modified depends on the methylation state of the target sequence. When the target site is unmodified, the DNA is cut. When the target site is hemimethylated, the complex acts as a maintenance MTase modifying the DNA so that both strands become methylated. After locating a non-methylated recognition site, the enzyme complex serves as a molecular motor that translocates DNA in an ATP-dependent manner until a collision occurs that triggers cleavage. The polypeptide is Type I restriction enzyme MjaIX specificity subunit (hsdS) (Methanocaldococcus jannaschii (strain ATCC 43067 / DSM 2661 / JAL-1 / JCM 10045 / NBRC 100440) (Methanococcus jannaschii)).